We begin with the raw amino-acid sequence, 466 residues long: MEEDTGIDEAKTYTVEKSEKVEPEKDGLSQFRDEEKSLGADMEDLHDETVRETLGKDQVQGVRENSSVEPNVEDVLEVNETDSVKETVVSAIVPVDEVEENRQVETSPSLAASSDSLTVTPCLSLDPATASTAQDLPLVSVPTKQEQRSDSPVVNRLSVTPVPRTPARDGYNWRKYGQKQVKSPKGSRSYYRCTYTECCAKKIECSNDSGNVVEIVNKGLHTHEPPRKTSFSPREIRVTTAIRPVSEDDTVVEELSIVPSGSDPSASTKEYICESQTLVDRKRHCENEAVEEPEPKRRLKKDNSQSSDSVSKPGKKNKFVVHAAGDVGICGDGYRWRKYGQKMVKGNPHPRNYYRCTSAGCPVRKHIETAVENTKAVIITYKGVHNHDMPVPKKRHGPPSSMLVAAAAPTSMRTRTDDQVNIPTSSQCSVGRESEKQSKEALDVGGEKVMESARTLLSIGFEIKQC.

Disordered stretches follow at residues 1-45 (MEED…MEDL) and 140-166 (SVPT…PRTP). Residues 8–38 (DEAKTYTVEKSEKVEPEKDGLSQFRDEEKSL) show a composition bias toward basic and acidic residues. Residues 162–226 (VPRTPARDGY…NKGLHTHEPP (65 aa)) constitute a DNA-binding region (WRKY 1). Zn(2+)-binding residues include Cys193, Cys198, His221, and His223. Residues 284-317 (HCENEAVEEPEPKRRLKKDNSQSSDSVSKPGKKN) form a disordered region. Residues 325-390 (GDVGICGDGY…YKGVHNHDMP (66 aa)) constitute a DNA-binding region (WRKY 2). Residues Cys356, Cys361, His385, and His387 each contribute to the Zn(2+) site. Residues 410 to 439 (TSMRTRTDDQVNIPTSSQCSVGRESEKQSK) are disordered. Over residues 419 to 429 (QVNIPTSSQCS) the composition is skewed to polar residues.

Belongs to the WRKY group I family.

The protein resides in the nucleus. Its function is as follows. Transcription factor. Interacts specifically with the W box (5'-(T)TGAC[CT]-3'), a frequently occurring elicitor-responsive cis-acting element. This Arabidopsis thaliana (Mouse-ear cress) protein is Probable WRKY transcription factor 32 (WRKY32).